A 683-amino-acid polypeptide reads, in one-letter code: Methionine--tRNA ligase (683 aa).

Positions 23-33 (PYANGSAHIGH) match the 'HIGH' region motif. Residues Cys154, Cys157, Cys166, and Cys170 each contribute to the Zn(2+) site. The short motif at 335-339 (KFSKS) is the 'KMSKS' region element. Residue Lys338 participates in ATP binding. Positions 583-683 (DFAKMELRVG…KPSEPGTKVR (101 aa)) constitute a tRNA-binding domain.

Belongs to the class-I aminoacyl-tRNA synthetase family. MetG type 1 subfamily. Homodimer. Requires Zn(2+) as cofactor.

It localises to the cytoplasm. It carries out the reaction tRNA(Met) + L-methionine + ATP = L-methionyl-tRNA(Met) + AMP + diphosphate. Is required not only for elongation of protein synthesis but also for the initiation of all mRNA translation through initiator tRNA(fMet) aminoacylation. The sequence is that of Methionine--tRNA ligase from Methanocella arvoryzae (strain DSM 22066 / NBRC 105507 / MRE50).